Reading from the N-terminus, the 337-residue chain is Cytidine deaminase 2 (337 aa).

2 consecutive CMP/dCMP-type deaminase domains span residues 43-164 and 199-320; these read TDPI…FSSL and LDCS…LKYL. Substrate is bound at residue 84–86; the sequence is NVD. Residue H97 participates in Zn(2+) binding. E99 serves as the catalytic Proton donor. Positions 132 and 135 each coordinate Zn(2+).

Belongs to the cytidine and deoxycytidylate deaminase family. As to quaternary structure, homodimer. Zn(2+) is required as a cofactor.

The catalysed reaction is cytidine + H2O + H(+) = uridine + NH4(+). It carries out the reaction 2'-deoxycytidine + H2O + H(+) = 2'-deoxyuridine + NH4(+). In terms of biological role, this enzyme scavenges exogenous and endogenous cytidine and 2'-deoxycytidine for UMP synthesis. The polypeptide is Cytidine deaminase 2 (CDA2) (Arabidopsis thaliana (Mouse-ear cress)).